Consider the following 203-residue polypeptide: Ribosome maturation factor RimP (203 aa).

The segment at 184-203 (RRGSAPVEDEEGEGEAPTAH) is disordered.

This sequence belongs to the RimP family.

Its subcellular location is the cytoplasm. In terms of biological role, required for maturation of 30S ribosomal subunits. This is Ribosome maturation factor RimP from Methylobacterium nodulans (strain LMG 21967 / CNCM I-2342 / ORS 2060).